We begin with the raw amino-acid sequence, 83 residues long: MQNDAGEFVDLYVPRKCSASNRIIGAKDHASIQMNVAEVDKVTGRFNGQFKTYAICGAIRRMGESDDSILRLAKADGIVSKNF.

Residue Met-1 is modified to N-acetylmethionine. Residue Lys-41 forms a Glycyl lysine isopeptide (Lys-Gly) (interchain with G-Cter in SUMO2) linkage. Lys-81 is subject to N6-acetyllysine.

The protein belongs to the eukaryotic ribosomal protein eS21 family. In terms of assembly, component of the 40S small ribosomal subunit.

The protein resides in the cytoplasm. It is found in the cytosol. The protein localises to the rough endoplasmic reticulum. Its function is as follows. Component of the small ribosomal subunit. The ribosome is a large ribonucleoprotein complex responsible for the synthesis of proteins in the cell. This is Small ribosomal subunit protein eS21 (RPS21) from Sus scrofa (Pig).